The primary structure comprises 216 residues: Uracil phosphoribosyltransferase (216 aa).

Residues R85, R110, and 135–143 (DPMVATGYS) contribute to the 5-phospho-alpha-D-ribose 1-diphosphate site. Uracil-binding positions include I200 and 205-207 (GDA). D206 lines the 5-phospho-alpha-D-ribose 1-diphosphate pocket.

Belongs to the UPRTase family. It depends on Mg(2+) as a cofactor.

The catalysed reaction is UMP + diphosphate = 5-phospho-alpha-D-ribose 1-diphosphate + uracil. The protein operates within pyrimidine metabolism; UMP biosynthesis via salvage pathway; UMP from uracil: step 1/1. Its activity is regulated as follows. Allosterically activated by GTP. Its function is as follows. Catalyzes the conversion of uracil and 5-phospho-alpha-D-ribose 1-diphosphate (PRPP) to UMP and diphosphate. The protein is Uracil phosphoribosyltransferase of Paraburkholderia xenovorans (strain LB400).